The chain runs to 210 residues: Regulator of G-protein signaling 17 (210 aa).

The interval 1–21 (MRKRQQSQNEGTSAVSQAPGN) is disordered. Residues 84-200 (NFDKMMKTPA…LNSQIYKSLV (117 aa)) enclose the RGS domain.

Interacts with GNAI1 and GNAQ. Interacts with GNAZ and GNAI2. Forms a complex with mu-opioid receptors and G(alpha)z/i2 subunits, including GNAZ and GNAI2; the formation of this complex results in mu-opioid receptor desensitization. Post-translationally, N- and O-glycosylated in synapsomal membranes. Serine phosphorylated in synapsomal membranes. In terms of processing, sumoylated with SUMO1 and SUM02 in synaptosomes. The sumoylated forms act as a scaffold for sequestering mu-opioid receptor-activated G(alpha) subunits.

The protein localises to the membrane. It localises to the synapse. The protein resides in the synaptosome. Its subcellular location is the nucleus. It is found in the cytoplasm. Regulates G protein-coupled receptor signaling cascades, including signaling via muscarinic acetylcholine receptor CHRM2 and dopamine receptor DRD2. Inhibits signal transduction by increasing the GTPase activity of G protein alpha subunits, thereby driving them into their inactive GDP-bound form. Binds selectively to GNAZ and GNAI2 subunits, accelerates their GTPase activity and regulates their signaling activities. Negatively regulates mu-opioid receptor-mediated activation of the G-proteins. The protein is Regulator of G-protein signaling 17 (RGS17) of Gallus gallus (Chicken).